Reading from the N-terminus, the 87-residue chain is DNA-directed RNA polymerase subunit omega (87 aa).

This sequence belongs to the RNA polymerase subunit omega family. The RNAP catalytic core consists of 2 alpha, 1 beta, 1 beta' and 1 omega subunit. When a sigma factor is associated with the core the holoenzyme is formed, which can initiate transcription.

It carries out the reaction RNA(n) + a ribonucleoside 5'-triphosphate = RNA(n+1) + diphosphate. Functionally, promotes RNA polymerase assembly. Latches the N- and C-terminal regions of the beta' subunit thereby facilitating its interaction with the beta and alpha subunits. The polypeptide is DNA-directed RNA polymerase subunit omega (Alcanivorax borkumensis (strain ATCC 700651 / DSM 11573 / NCIMB 13689 / SK2)).